Here is a 279-residue protein sequence, read N- to C-terminus: HTH-type transcriptional regulator HdfR (279 aa).

The region spanning 1–58 (MDTELLKTFLEVSRTRHFGRAAESLYLTQSAVSFRIRQLENQLGVNLFTRHRNNIRLT) is the HTH lysR-type domain. Residues 18-37 (FGRAAESLYLTQSAVSFRIR) constitute a DNA-binding region (H-T-H motif).

Belongs to the LysR transcriptional regulatory family.

In terms of biological role, negatively regulates the transcription of the flagellar master operon flhDC by binding to the upstream region of the operon. This Escherichia coli O6:K15:H31 (strain 536 / UPEC) protein is HTH-type transcriptional regulator HdfR.